Here is a 247-residue protein sequence, read N- to C-terminus: NH(3)-dependent NAD(+) synthetase (247 aa).

29 to 36 (GLSGGVDS) provides a ligand contact to ATP. D35 lines the Mg(2+) pocket. R112 lines the deamido-NAD(+) pocket. T132 contributes to the ATP binding site. A Mg(2+)-binding site is contributed by E137. Residues K145 and D152 each coordinate deamido-NAD(+). ATP-binding residues include K161 and S183. 233 to 234 (HK) contacts deamido-NAD(+).

The protein belongs to the NAD synthetase family. In terms of assembly, homodimer.

It carries out the reaction deamido-NAD(+) + NH4(+) + ATP = AMP + diphosphate + NAD(+) + H(+). The protein operates within cofactor biosynthesis; NAD(+) biosynthesis; NAD(+) from deamido-NAD(+) (ammonia route): step 1/1. In terms of biological role, catalyzes the ATP-dependent amidation of deamido-NAD to form NAD. Uses ammonia as a nitrogen source. The chain is NH(3)-dependent NAD(+) synthetase from Archaeoglobus fulgidus (strain ATCC 49558 / DSM 4304 / JCM 9628 / NBRC 100126 / VC-16).